Consider the following 339-residue polypeptide: Anthranilate phosphoribosyltransferase (339 aa).

Residues Gly80, 83–84 (GD), Thr88, 90–93 (NIST), 108–116 (KHGNRAMSS), and Ser120 contribute to the 5-phospho-alpha-D-ribose 1-diphosphate site. Gly80 serves as a coordination point for anthranilate. Residue Ser92 coordinates Mg(2+). Position 111 (Asn111) interacts with anthranilate. Anthranilate is bound at residue Arg166. Asp225 and Glu226 together coordinate Mg(2+).

It belongs to the anthranilate phosphoribosyltransferase family. Homodimer. The cofactor is Mg(2+).

The catalysed reaction is N-(5-phospho-beta-D-ribosyl)anthranilate + diphosphate = 5-phospho-alpha-D-ribose 1-diphosphate + anthranilate. It participates in amino-acid biosynthesis; L-tryptophan biosynthesis; L-tryptophan from chorismate: step 2/5. Functionally, catalyzes the transfer of the phosphoribosyl group of 5-phosphorylribose-1-pyrophosphate (PRPP) to anthranilate to yield N-(5'-phosphoribosyl)-anthranilate (PRA). In Chloroflexus aurantiacus (strain ATCC 29366 / DSM 635 / J-10-fl), this protein is Anthranilate phosphoribosyltransferase.